Here is a 31-residue protein sequence, read N- to C-terminus: Photosystem II reaction center protein T (31 aa).

Residues 3–23 (SFAYVLILTLAIATLFFAIAF) traverse the membrane as a helical segment.

The protein belongs to the PsbT family. PSII is composed of 1 copy each of membrane proteins PsbA, PsbB, PsbC, PsbD, PsbE, PsbF, PsbH, PsbI, PsbJ, PsbK, PsbL, PsbM, PsbT, PsbX, PsbY, PsbZ, Psb30/Ycf12, peripheral proteins PsbO, CyanoQ (PsbQ), PsbU, PsbV and a large number of cofactors. It forms dimeric complexes.

The protein localises to the cellular thylakoid membrane. Found at the monomer-monomer interface of the photosystem II (PS II) dimer, plays a role in assembly and dimerization of PSII. PSII is a light-driven water plastoquinone oxidoreductase, using light energy to abstract electrons from H(2)O, generating a proton gradient subsequently used for ATP formation. The sequence is that of Photosystem II reaction center protein T from Parasynechococcus marenigrum (strain WH8102).